The following is a 237-amino-acid chain: Pyridoxine 5'-phosphate synthase (237 aa).

2 residues coordinate 3-amino-2-oxopropyl phosphate: N7 and R18. The Proton acceptor role is filled by H43. Positions 45 and 50 each coordinate 1-deoxy-D-xylulose 5-phosphate. The active-site Proton acceptor is the E70. T100 provides a ligand contact to 1-deoxy-D-xylulose 5-phosphate. Catalysis depends on H190, which acts as the Proton donor. 3-amino-2-oxopropyl phosphate contacts are provided by residues D191 and 213–214 (GH).

It belongs to the PNP synthase family. In terms of assembly, homooctamer; tetramer of dimers.

Its subcellular location is the cytoplasm. The enzyme catalyses 3-amino-2-oxopropyl phosphate + 1-deoxy-D-xylulose 5-phosphate = pyridoxine 5'-phosphate + phosphate + 2 H2O + H(+). It functions in the pathway cofactor biosynthesis; pyridoxine 5'-phosphate biosynthesis; pyridoxine 5'-phosphate from D-erythrose 4-phosphate: step 5/5. In terms of biological role, catalyzes the complicated ring closure reaction between the two acyclic compounds 1-deoxy-D-xylulose-5-phosphate (DXP) and 3-amino-2-oxopropyl phosphate (1-amino-acetone-3-phosphate or AAP) to form pyridoxine 5'-phosphate (PNP) and inorganic phosphate. The polypeptide is Pyridoxine 5'-phosphate synthase (Christiangramia forsetii (strain DSM 17595 / CGMCC 1.15422 / KT0803) (Gramella forsetii)).